Reading from the N-terminus, the 369-residue chain is Anhydro-N-acetylmuramic acid kinase (369 aa).

Glycine 12 to aspartate 19 is a binding site for ATP.

The protein belongs to the anhydro-N-acetylmuramic acid kinase family.

The enzyme catalyses 1,6-anhydro-N-acetyl-beta-muramate + ATP + H2O = N-acetyl-D-muramate 6-phosphate + ADP + H(+). It participates in amino-sugar metabolism; 1,6-anhydro-N-acetylmuramate degradation. It functions in the pathway cell wall biogenesis; peptidoglycan recycling. Its function is as follows. Catalyzes the specific phosphorylation of 1,6-anhydro-N-acetylmuramic acid (anhMurNAc) with the simultaneous cleavage of the 1,6-anhydro ring, generating MurNAc-6-P. Is required for the utilization of anhMurNAc either imported from the medium or derived from its own cell wall murein, and thus plays a role in cell wall recycling. The sequence is that of Anhydro-N-acetylmuramic acid kinase from Escherichia coli O157:H7.